The following is a 433-amino-acid chain: Enolase (433 aa).

Glutamine 167 provides a ligand contact to (2R)-2-phosphoglycerate. Catalysis depends on glutamate 209, which acts as the Proton donor. Aspartate 246, glutamate 291, and aspartate 318 together coordinate Mg(2+). Residues lysine 343, arginine 372, serine 373, and lysine 394 each contribute to the (2R)-2-phosphoglycerate site. Lysine 343 (proton acceptor) is an active-site residue.

It belongs to the enolase family. Component of the RNA degradosome, a multiprotein complex involved in RNA processing and mRNA degradation. Mg(2+) serves as cofactor.

The protein localises to the cytoplasm. It is found in the secreted. The protein resides in the cell surface. It catalyses the reaction (2R)-2-phosphoglycerate = phosphoenolpyruvate + H2O. Its pathway is carbohydrate degradation; glycolysis; pyruvate from D-glyceraldehyde 3-phosphate: step 4/5. Functionally, catalyzes the reversible conversion of 2-phosphoglycerate (2-PG) into phosphoenolpyruvate (PEP). It is essential for the degradation of carbohydrates via glycolysis. This is Enolase from Pasteurella multocida (strain Pm70).